The primary structure comprises 332 residues: Large ribosomal subunit protein mL44 (332 aa).

The transit peptide at Met-1–Gly-30 directs the protein to the mitochondrion. One can recognise an RNase III domain in the interval Asp-86–Leu-228. The 71-residue stretch at Asn-236–Gly-306 folds into the DRBM domain.

It belongs to the ribonuclease III family. Mitochondrion-specific ribosomal protein mL44 subfamily. In terms of assembly, component of the mitochondrial ribosome large subunit (39S) which comprises a 16S rRNA and about 50 distinct proteins.

Its subcellular location is the mitochondrion. In terms of biological role, component of the 39S subunit of mitochondrial ribosome. May have a function in the assembly/stability of nascent mitochondrial polypeptides exiting the ribosome. The chain is Large ribosomal subunit protein mL44 (MRPL44) from Bos taurus (Bovine).